The chain runs to 185 residues: MLNQIKQDAQDRMTKSIDALRNSLASVRTGRASPSLLDGIKIKAYGTDTPLNQVASISVSEGRSLVITVFDKNMSKDVEKAIYASDLGLTPTVVGTLIRLNLPPLTEERRKELTKVVHSEGEDTKVAIRNIRRDANQQIKDMLKSKEITEDEVRQGEEDIQKLTDKAIKSVDEVVKSKEQELMTV.

Belongs to the RRF family.

Its subcellular location is the cytoplasm. Responsible for the release of ribosomes from messenger RNA at the termination of protein biosynthesis. May increase the efficiency of translation by recycling ribosomes from one round of translation to another. In Xylella fastidiosa (strain 9a5c), this protein is Ribosome-recycling factor.